The sequence spans 456 residues: Glycerol-3-phosphate dehydrogenase [NAD(+)] At3g07690, cytosolic (456 aa).

NAD(+) contacts are provided by residues 41–46, K189, and A228; that span reads GAGAWG. Substrate is bound at residue K189. K278 (proton acceptor) is an active-site residue. NAD(+)-binding residues include R340 and Q368. A substrate-binding site is contributed by 340 to 341; that stretch reads RN.

Belongs to the NAD-dependent glycerol-3-phosphate dehydrogenase family. Homodimer.

The protein localises to the cytoplasm. It carries out the reaction sn-glycerol 3-phosphate + NAD(+) = dihydroxyacetone phosphate + NADH + H(+). Required for glycerol-3-phosphate (G3P) accumulation during systemic acquired resistance (SAR) establishment. This is Glycerol-3-phosphate dehydrogenase [NAD(+)] At3g07690, cytosolic from Arabidopsis thaliana (Mouse-ear cress).